We begin with the raw amino-acid sequence, 860 residues long: Alanine--tRNA ligase (860 aa).

Zn(2+) is bound by residues His-563, His-567, Cys-665, and His-669.

It belongs to the class-II aminoacyl-tRNA synthetase family. The cofactor is Zn(2+).

It is found in the cytoplasm. It carries out the reaction tRNA(Ala) + L-alanine + ATP = L-alanyl-tRNA(Ala) + AMP + diphosphate. Catalyzes the attachment of alanine to tRNA(Ala) in a two-step reaction: alanine is first activated by ATP to form Ala-AMP and then transferred to the acceptor end of tRNA(Ala). Also edits incorrectly charged Ser-tRNA(Ala) and Gly-tRNA(Ala) via its editing domain. In Vibrio cholerae serotype O1 (strain ATCC 39541 / Classical Ogawa 395 / O395), this protein is Alanine--tRNA ligase.